We begin with the raw amino-acid sequence, 397 residues long: Exodeoxyribonuclease 7 large subunit (397 aa).

This sequence belongs to the XseA family. As to quaternary structure, heterooligomer composed of large and small subunits.

The protein localises to the cytoplasm. It catalyses the reaction Exonucleolytic cleavage in either 5'- to 3'- or 3'- to 5'-direction to yield nucleoside 5'-phosphates.. Its function is as follows. Bidirectionally degrades single-stranded DNA into large acid-insoluble oligonucleotides, which are then degraded further into small acid-soluble oligonucleotides. The protein is Exodeoxyribonuclease 7 large subunit of Anaplasma marginale (strain St. Maries).